Here is a 475-residue protein sequence, read N- to C-terminus: MDQEESHVISIFETLGAYFINIFYNFLYKNALYKKHSIVTEYQYQVKGYILGVKQNKKLYEKMLDSFYKYFCNITQINSKTLNFSNFITTIVDSFIPKEYSQSISLEKKESILELLLCDYISNLGTFITTEKMLPFIIKNRKENYHKVTKEMQDYSLTFLLKKRMELYNKFLRKQAYVEPETELEETYARLSSYNRSLLHQIEELTSEKKSLLADLSTLRKKYEKRQSEYRRLVQLLYQQIQRSSTSKSSYPLTKFIETLPSEHFSNEEYQKETPADQKEVVEMELLRKQELLTSQELTSKSPNNYPVPHSRTIVSKPPDNYPVPRSRTTTKLDFDNSLQNQELHTKNGFSEKDIVEFGQDKPEEENILAIDQDKPEEENILAIKQDIPEEENILAIDQDKPEFNQDTPEFKEAVLDTKENILEEENQDEPIVQNPFLENFWKPEQKTFNQSGLFEESSNFSNDWSGGDVTLNFS.

A helical transmembrane segment spans residues 7-28 (HVISIFETLGAYFINIFYNFLY). 3 N-linked (GlcNAc...) asparagine; by host glycosylation sites follow: Asn73, Asn83, and Asn195. A coiled-coil region spans residues 183 to 233 (ELEETYARLSSYNRSLLHQIEELTSEKKSLLADLSTLRKKYEKRQSEYRRL). A compositionally biased stretch (polar residues) spans 295–305 (SQELTSKSPNN). The segment at 295-324 (SQELTSKSPNNYPVPHSRTIVSKPPDNYPV) is disordered. Residues Asn450 and Asn460 are each glycosylated (N-linked (GlcNAc...) asparagine; by host).

It belongs to the asfivirus B475L family.

It localises to the host membrane. This is an uncharacterized protein from Ornithodoros (relapsing fever ticks).